Here is a 305-residue protein sequence, read N- to C-terminus: Oxygen-dependent coproporphyrinogen-III oxidase (305 aa).

S93 contacts substrate. The a divalent metal cation site is built by H97 and H107. H107 (proton donor) is an active-site residue. Residue 109 to 111 (NVR) participates in substrate binding. A divalent metal cation contacts are provided by H146 and H176. Positions 241-276 (YVEFNLVFDRGTLFGLQSGGRTESILMSLPPQVRWG) are important for dimerization. 259–261 (GGR) is a substrate binding site.

The protein belongs to the aerobic coproporphyrinogen-III oxidase family. Homodimer. It depends on a divalent metal cation as a cofactor.

It is found in the cytoplasm. The catalysed reaction is coproporphyrinogen III + O2 + 2 H(+) = protoporphyrinogen IX + 2 CO2 + 2 H2O. It functions in the pathway porphyrin-containing compound metabolism; protoporphyrin-IX biosynthesis; protoporphyrinogen-IX from coproporphyrinogen-III (O2 route): step 1/1. In terms of biological role, involved in the heme biosynthesis. Catalyzes the aerobic oxidative decarboxylation of propionate groups of rings A and B of coproporphyrinogen-III to yield the vinyl groups in protoporphyrinogen-IX. The sequence is that of Oxygen-dependent coproporphyrinogen-III oxidase from Pseudomonas aeruginosa (strain UCBPP-PA14).